Reading from the N-terminus, the 213-residue chain is MVFHYPNGRAYDYHKNENHPSLVNKVNHRSINHNRSKTIYGNRGMSLEEEINESNQYYLSQGIAVIHKKPIPIQIVSVDYPKRSAAVIKEAYFKQASTTDYNGVYKGKYLDFEAKETTNISSFPLRNFHAHQVEHMRACQKQGGICFTIVKFTKTDELFILPADLLFKYWDEQDKSRKSIPKAEIEQLGYKLNYSISPRIPFLKGVDLLIANS.

Residues Thr98, Asp100, Glu113, and Gln132 each coordinate Mg(2+).

This sequence belongs to the RecU family. Requires Mg(2+) as cofactor.

Its subcellular location is the cytoplasm. The enzyme catalyses Endonucleolytic cleavage at a junction such as a reciprocal single-stranded crossover between two homologous DNA duplexes (Holliday junction).. Endonuclease that resolves Holliday junction intermediates in genetic recombination. Cleaves mobile four-strand junctions by introducing symmetrical nicks in paired strands. Promotes annealing of linear ssDNA with homologous dsDNA. Required for DNA repair, homologous recombination and chromosome segregation. This is Holliday junction resolvase RecU from Ligilactobacillus salivarius (strain UCC118) (Lactobacillus salivarius).